The sequence spans 245 residues: Orotidine 5'-phosphate decarboxylase (245 aa).

Residues Asp-22, Lys-44, 71 to 80 (DLKFHDIPNT), Thr-131, Arg-192, Gln-201, Gly-221, and Arg-222 contribute to the substrate site. Catalysis depends on Lys-73, which acts as the Proton donor.

Belongs to the OMP decarboxylase family. Type 1 subfamily. As to quaternary structure, homodimer.

It catalyses the reaction orotidine 5'-phosphate + H(+) = UMP + CO2. The protein operates within pyrimidine metabolism; UMP biosynthesis via de novo pathway; UMP from orotate: step 2/2. Functionally, catalyzes the decarboxylation of orotidine 5'-monophosphate (OMP) to uridine 5'-monophosphate (UMP). The sequence is that of Orotidine 5'-phosphate decarboxylase from Salmonella paratyphi A (strain ATCC 9150 / SARB42).